Reading from the N-terminus, the 142-residue chain is Fluoride-specific ion channel FluC 1 (142 aa).

Helical transmembrane passes span 23–43 (VNIA…YLID), 54–74 (LPLG…GLIG), 79–99 (GWLL…FSTF), and 116–136 (LGNV…AVSL). Na(+)-binding residues include G91 and T94.

It belongs to the fluoride channel Fluc/FEX (TC 1.A.43) family.

It localises to the cell membrane. The catalysed reaction is fluoride(in) = fluoride(out). Its activity is regulated as follows. Na(+) is not transported, but it plays an essential structural role and its presence is essential for fluoride channel function. Fluoride-specific ion channel. Important for reducing fluoride concentration in the cell, thus reducing its toxicity. This Nocardia farcinica (strain IFM 10152) protein is Fluoride-specific ion channel FluC 1.